The sequence spans 689 residues: Polyribonucleotide nucleotidyltransferase (689 aa).

Mg(2+) contacts are provided by D482 and D488. Positions 549 to 608 (PRMITLTIPQNKIGELIGPGGKNIRKIQEDNNVKIDIEETGRVFISGVESDGVKSAKEYV) constitute a KH domain. Positions 618–686 (GKIYKSRVTK…KQGRINLSIK (69 aa)) constitute an S1 motif domain.

This sequence belongs to the polyribonucleotide nucleotidyltransferase family. Mg(2+) serves as cofactor.

Its subcellular location is the cytoplasm. The catalysed reaction is RNA(n+1) + phosphate = RNA(n) + a ribonucleoside 5'-diphosphate. Functionally, involved in mRNA degradation. Catalyzes the phosphorolysis of single-stranded polyribonucleotides processively in the 3'- to 5'-direction. In Endomicrobium trichonymphae, this protein is Polyribonucleotide nucleotidyltransferase.